A 1708-amino-acid polypeptide reads, in one-letter code: Rapamycin-insensitive companion of mTOR (1708 aa).

An interaction with NBN region spans residues 1-789; it reads MAAIGRGRSL…DKANLHALIQ (789 aa). Ser-21, Ser-35, and Ser-265 each carry phosphoserine. Residue Lys-274 forms a Glycyl lysine isopeptide (Lys-Gly) (interchain with G-Cter in ubiquitin) linkage. A ribosome-binding domain region spans residues 521-570; sequence LKDTEEALLINLRDSQVLQHKENLDWDWNLIGTILKWPNVNLRNYKDEQL. The ATP site is built by Asn-543, Arg-572, and Arg-576. The segment covering 1021–1043 has biased composition (low complexity); that stretch reads TLSLNSESTSSRHNSESESAPSS. A disordered region spans residues 1021-1045; that stretch reads TLSLNSESTSSRHNSESESAPSSMF. 2 positions are modified to N6-acetyllysine: Lys-1092 and Lys-1095. Disordered regions lie at residues 1101–1198 and 1218–1247; these read SLTL…ENTS and SFNTDTTTSGISSMSSSPSRETVAVDPTAM. Thr-1103 bears the Phosphothreonine mark. Lys-1116, Lys-1119, and Lys-1125 each carry N6-acetyllysine. At Thr-1135 the chain carries Phosphothreonine; by RPS6KB1. The residue at position 1138 (Ser-1138) is a Phosphoserine. Residues 1147 to 1158 are compositionally biased toward polar residues; sequence FTSSSAQKSLQL. Ser-1161, Ser-1218, and Ser-1234 each carry phosphoserine. The segment covering 1221 to 1239 has biased composition (low complexity); sequence TDTTTSGISSMSSSPSRET. At Thr-1270 the chain carries Phosphothreonine. 4 positions are modified to phosphoserine: Ser-1273, Ser-1277, Ser-1281, and Ser-1283. Position 1294 is a phosphothreonine (Thr-1294). A phosphoserine mark is found at Ser-1301 and Ser-1312. Phosphothreonine is present on Thr-1331. Ser-1345 and Ser-1352 each carry phosphoserine. Thr-1375 carries the post-translational modification Phosphothreonine. Ser-1384 bears the Phosphoserine mark. A Phosphotyrosine modification is found at Tyr-1385. 3 positions are modified to phosphoserine: Ser-1387, Ser-1395, and Ser-1410. Positions 1514, 1519, and 1522 each coordinate Zn(2+). Ser-1570, Ser-1573, Ser-1576, and Ser-1591 each carry phosphoserine. Cys-1651 lines the Zn(2+) pocket.

It belongs to the RICTOR family. In terms of assembly, component of the mechanistic target of rapamycin complex 2 (mTORC2), consisting in two heterotretramers composed of MTOR, MLST8, RICTOR and MAPKAP1/SIN1. The mTORC2 core complex associates with PRR5/PROTOR1 and/or PRR5L/PROTOR2. Contrary to mTORC1, mTORC2 does not bind to and is not sensitive to FKBP12-rapamycin. Binds directly to MTOR and PRR5 within the TORC2 complex; interaction with MTOR is enhanced by deubiquitination of RICTOR by USP9X. Interaction with MAPKAP1 is not enhanced by RICTOR deubiquitination by USP9X. Interacts with CCDC28B. Interacts with NBN. Interacts with SIK3. Interacts with NCKAP1L. Interacts with ARMH4 (via cytoplasmic tail); this interaction bridges ARMH4 to the mTORC2 complex and inhibits the mTORC2 kinase activity. Interacts with UBXN2A. Interacts with TSPAN8. Post-translationally, phosphorylated by MTOR; when part of mTORC2. Phosphorylated at Thr-1135 by RPS6KB1 downstream of the mTORC1 complex: phosphorylation of RICTOR inhibits mTORC2 signaling by creating a binding site for 14-3-3 proteins. Phosphorylated at Ser-1234 by GSK3B in response to endoplasmic stress, inhibiting mTORC2 signaling. In terms of processing, ubiquitinated by the SCF(FBXW7) complex, leading to its degradation by the proteasome. Deubiquitinated by USP9X; deubiquitination stabilizes RICTOR and enhances its binding to MTOR, thus promoting mTORC2 complex assembly. Acetylated by EP300/p300 in response to glucose, leading to activate the mTORC2 complex. Acetylation by BLOC1S1/GCN5L1 in response to hypotoxic stress protects RICTOR against ubiquitination and subsequent degradation by the proteasome. Highest levels in liver and brain with expression also detected in heart, muscle, spleen and kidney (at protein level).

The protein resides in the cell membrane. It is found in the endoplasmic reticulum membrane. The protein localises to the lysosome membrane. Its function is as follows. Component of the mechanistic target of rapamycin complex 2 (mTORC2), which transduces signals from growth factors to pathways involved in proliferation, cytoskeletal organization, lipogenesis and anabolic output. In response to growth factors, mTORC2 phosphorylates and activates AGC protein kinase family members, including AKT (AKT1, AKT2 and AKT3), PKC (PRKCA, PRKCB and PRKCE) and SGK1. In contrast to mTORC1, mTORC2 is nutrient-insensitive. Within the mTORC2 complex, RICTOR probably acts as a molecular adapter. RICTOR is responsible for the FKBP12-rapamycin-insensitivity of mTORC2. mTORC2 plays a critical role in AKT1 activation by mediating phosphorylation of different sites depending on the context, such as 'Thr-450', 'Ser-473', 'Ser-477' or 'Thr-479', facilitating the phosphorylation of the activation loop of AKT1 on 'Thr-308' by PDPK1/PDK1 which is a prerequisite for full activation. mTORC2 catalyzes the phosphorylation of SGK1 at 'Ser-422' and of PRKCA on 'Ser-657'. The mTORC2 complex also phosphorylates various proteins involved in insulin signaling, such as FBXW8 and IGF2BP1. mTORC2 acts upstream of Rho GTPases to regulate the actin cytoskeleton, probably by activating one or more Rho-type guanine nucleotide exchange factors. mTORC2 promotes the serum-induced formation of stress-fibers or F-actin. Plays an essential role in embryonic growth and development. In Mus musculus (Mouse), this protein is Rapamycin-insensitive companion of mTOR.